The sequence spans 157 residues: UPF0127 protein TK1120 (157 aa).

This sequence belongs to the UPF0127 family.

The protein is UPF0127 protein TK1120 of Thermococcus kodakarensis (strain ATCC BAA-918 / JCM 12380 / KOD1) (Pyrococcus kodakaraensis (strain KOD1)).